The sequence spans 138 residues: Putative pre-16S rRNA nuclease (138 aa).

It belongs to the YqgF nuclease family.

The protein localises to the cytoplasm. Its function is as follows. Could be a nuclease involved in processing of the 5'-end of pre-16S rRNA. The protein is Putative pre-16S rRNA nuclease of Geobacillus sp. (strain WCH70).